We begin with the raw amino-acid sequence, 382 residues long: Putative glutamate--cysteine ligase 2-1 (382 aa).

Belongs to the glutamate--cysteine ligase type 2 family. YbdK subfamily.

The catalysed reaction is L-cysteine + L-glutamate + ATP = gamma-L-glutamyl-L-cysteine + ADP + phosphate + H(+). Its function is as follows. ATP-dependent carboxylate-amine ligase which exhibits weak glutamate--cysteine ligase activity. The protein is Putative glutamate--cysteine ligase 2-1 of Nocardioides sp. (strain ATCC BAA-499 / JS614).